The primary structure comprises 122 residues: Large ribosomal subunit protein uL14c (122 aa).

This sequence belongs to the universal ribosomal protein uL14 family. Part of the 50S ribosomal subunit.

The protein localises to the plastid. Its subcellular location is the chloroplast. Its function is as follows. Binds to 23S rRNA. The sequence is that of Large ribosomal subunit protein uL14c from Oltmannsiellopsis viridis (Marine flagellate).